A 408-amino-acid polypeptide reads, in one-letter code: MDFGVLPPEINSGRMYAGPGSGPMMAAAAAWDSLAAELGLAAGGYRLAISELTGAYWAGPAAASMVAAVTPYVAWLSATAGQAEQAGMQARAAAAAYELAFAMTVPPPVVVANRALLVALVATNFFGQNTPAIAATEAQYAEMWAQDAAAMYAYAGSAAIATELTPFTAAPVTTSPAALAGQAAATVSSTVPPLATTAAVPQLLQQLSSTSLIPWYSALQQWLAENLLGLTPDNRMTIVRLLGISYFDEGLLQFEASLAQQAIPGTPGGAGDSGSSVLDSWGPTIFAGPRASPSVAGGGAVGGVQTPQPYWYWALDRESIGGSVSAALGKGSSAGSLSVPPDWAARARWANPAAWRLPGDDVTALRGTAENALLRGFPMASAGQSTGGGFVHKYGFRLAVMQRPPFAG.

Residues 56–76 (YWAGPAAASMVAAVTPYVAWL) form a helical membrane-spanning segment.

It belongs to the mycobacterial PPE family.

It is found in the cell membrane. This is an uncharacterized protein from Mycobacterium bovis (strain ATCC BAA-935 / AF2122/97).